The sequence spans 384 residues: 1-deoxy-D-xylulose 5-phosphate reductoisomerase (384 aa).

NADPH contacts are provided by T10, G11, S12, I13, K37, and N124. K125 contacts 1-deoxy-D-xylulose 5-phosphate. NADPH is bound at residue E126. D150 serves as a coordination point for Mn(2+). The 1-deoxy-D-xylulose 5-phosphate site is built by S151, E152, S176, and H199. E152 serves as a coordination point for Mn(2+). G205 lines the NADPH pocket. S212, N217, K218, and E221 together coordinate 1-deoxy-D-xylulose 5-phosphate. E221 is a Mn(2+) binding site.

The protein belongs to the DXR family. The cofactor is Mg(2+). Mn(2+) is required as a cofactor.

It carries out the reaction 2-C-methyl-D-erythritol 4-phosphate + NADP(+) = 1-deoxy-D-xylulose 5-phosphate + NADPH + H(+). It functions in the pathway isoprenoid biosynthesis; isopentenyl diphosphate biosynthesis via DXP pathway; isopentenyl diphosphate from 1-deoxy-D-xylulose 5-phosphate: step 1/6. In terms of biological role, catalyzes the NADPH-dependent rearrangement and reduction of 1-deoxy-D-xylulose-5-phosphate (DXP) to 2-C-methyl-D-erythritol 4-phosphate (MEP). In Clostridium tetani (strain Massachusetts / E88), this protein is 1-deoxy-D-xylulose 5-phosphate reductoisomerase.